The chain runs to 1365 residues: DNA-directed RNA polymerase subunit beta' (1365 aa).

Zn(2+) is bound by residues Cys249, Cys316, Cys323, and Cys326.

This sequence belongs to the RNA polymerase beta' chain family. RpoC2 subfamily. As to quaternary structure, in cyanobacteria the RNAP catalytic core is composed of 2 alpha, 1 beta, 1 beta', 1 gamma and 1 omega subunit. When a sigma factor is associated with the core the holoenzyme is formed, which can initiate transcription. Requires Zn(2+) as cofactor.

It carries out the reaction RNA(n) + a ribonucleoside 5'-triphosphate = RNA(n+1) + diphosphate. In terms of biological role, DNA-dependent RNA polymerase catalyzes the transcription of DNA into RNA using the four ribonucleoside triphosphates as substrates. In Synechococcus sp. (strain CC9311), this protein is DNA-directed RNA polymerase subunit beta'.